We begin with the raw amino-acid sequence, 301 residues long: Acetyl-coenzyme A carboxylase carboxyl transferase subunit beta (301 aa).

A CoA carboxyltransferase N-terminal domain is found at 25–294 (LWIKCPETGE…SAANDVTRGA (270 aa)).

Belongs to the AccD/PCCB family. Acetyl-CoA carboxylase is a heterohexamer composed of biotin carboxyl carrier protein (AccB), biotin carboxylase (AccC) and two subunits each of ACCase subunit alpha (AccA) and ACCase subunit beta (AccD).

The protein resides in the cytoplasm. It catalyses the reaction N(6)-carboxybiotinyl-L-lysyl-[protein] + acetyl-CoA = N(6)-biotinyl-L-lysyl-[protein] + malonyl-CoA. Its pathway is lipid metabolism; malonyl-CoA biosynthesis; malonyl-CoA from acetyl-CoA: step 1/1. Its function is as follows. Component of the acetyl coenzyme A carboxylase (ACC) complex. Biotin carboxylase (BC) catalyzes the carboxylation of biotin on its carrier protein (BCCP) and then the CO(2) group is transferred by the transcarboxylase to acetyl-CoA to form malonyl-CoA. The protein is Acetyl-coenzyme A carboxylase carboxyl transferase subunit beta of Rhizobium etli (strain ATCC 51251 / DSM 11541 / JCM 21823 / NBRC 15573 / CFN 42).